The following is a 1829-amino-acid chain: Protein TIC 214 (1829 aa).

Transmembrane regions (helical) follow at residues 18–38, 67–87, 90–110, 127–147, 174–194, and 224–244; these read IINS…FSIG, FIAG…HLAL, PHTI…WNNP, LSIQ…HFLL, FVGW…VLVW, and IFSI…PSPI. Basic and acidic residues predominate over residues 260–272; the sequence is RDVEIEKTFERGG. A disordered region spans residues 260–301; sequence RDVEIEKTFERGGTKQGQEVSAEEDPSPSLFSEEKEDPDKIE.

This sequence belongs to the TIC214 family. Part of the Tic complex.

The protein localises to the plastid. It localises to the chloroplast inner membrane. Involved in protein precursor import into chloroplasts. May be part of an intermediate translocation complex acting as a protein-conducting channel at the inner envelope. The sequence is that of Protein TIC 214 from Citrus sinensis (Sweet orange).